The sequence spans 249 residues: Isoprenyl transferase (249 aa).

Residue aspartate 29 is part of the active site. Aspartate 29 contributes to the Mg(2+) binding site. Substrate-binding positions include 30-33, tryptophan 34, arginine 42, histidine 46, and 74-76; these read GNGR and STE. Catalysis depends on asparagine 77, which acts as the Proton acceptor. Substrate-binding positions include tryptophan 78, arginine 80, arginine 197, and 203-205; that span reads RLS. Glutamate 216 contacts Mg(2+).

The protein belongs to the UPP synthase family. Homodimer. Mg(2+) serves as cofactor.

In terms of biological role, catalyzes the condensation of isopentenyl diphosphate (IPP) with allylic pyrophosphates generating different type of terpenoids. The chain is Isoprenyl transferase from Trichormus variabilis (strain ATCC 29413 / PCC 7937) (Anabaena variabilis).